The following is a 171-amino-acid chain: Nicotinamide-nucleotide adenylyltransferase (171 aa).

This sequence belongs to the archaeal NMN adenylyltransferase family.

The protein resides in the cytoplasm. It carries out the reaction beta-nicotinamide D-ribonucleotide + ATP + H(+) = diphosphate + NAD(+). The protein operates within cofactor biosynthesis; NAD(+) biosynthesis; NAD(+) from nicotinamide D-ribonucleotide: step 1/1. In Ignicoccus hospitalis (strain KIN4/I / DSM 18386 / JCM 14125), this protein is Nicotinamide-nucleotide adenylyltransferase.